A 129-amino-acid polypeptide reads, in one-letter code: Translation initiation factor 5A (129 aa).

At Lys-36 the chain carries Hypusine.

This sequence belongs to the eIF-5A family.

It localises to the cytoplasm. In terms of biological role, functions by promoting the formation of the first peptide bond. This chain is Translation initiation factor 5A (eIF5A), found in Methanobrevibacter smithii (strain ATCC 35061 / DSM 861 / OCM 144 / PS).